The following is a 230-amino-acid chain: Large ribosomal subunit protein uL1 (230 aa).

Belongs to the universal ribosomal protein uL1 family. Part of the 50S ribosomal subunit.

Its function is as follows. Binds directly to 23S rRNA. The L1 stalk is quite mobile in the ribosome, and is involved in E site tRNA release. Functionally, protein L1 is also a translational repressor protein, it controls the translation of the L11 operon by binding to its mRNA. This chain is Large ribosomal subunit protein uL1, found in Bacillus anthracis (strain A0248).